The following is a 692-amino-acid chain: MAKRLLESSQNDQANRKNSKIEKKEVSFYEEEETDDSFDSFYQDEEDDLSDIDWEEVSLDGSLTVTFGNIRRDREKVSKYKRKHNKKAFNYQRLKYGLHLIMIPFMLFLLKSRMKWIDDERLNRRLRRSVPKLIGKKFKDWDVRDPAFKMDSLRTLLLGLVLWFRSNYKMNSNGIRQNFNRLQYLIKYADNQNENSISESTYKKVLENQQEFYGNRPLINHGVEDIRKMAKRKMANRDILTLFFFIILENVLPGPKKLYLCFALPLHDYDIRCNKVKWQIEHGIGKVPNRFDSDLIQPYFWIELEVPTLSDGELYIIDPIAHLGEREMVLKTREDQFVPTYQPSVDMKYNLNQKFHYVVRINHAEKVLQDVSPRYVPNVCYRYFELSESSPILKSKHYTSYQYLSKWLKVLNKKKASVHHYAIMKKIALTNFTLPKSVTEIKRTDNFVIPSLLKSNEVLKACAKQAATFTKGDNSQEPIFWRRDVIQLKSKQHWAILGRSILPNAQPLKRKKYLPMRERMVRNLDKYVIKELFSYEQTMKSPKYPSTYCDHLGQEHVITDLSHYKNKFGNIEIYSKETKPDGFELIPLSKEVDIKCLIKEYNKGKRKMQKIKYLDVVSGFDFKQKKGHAIPKIESILVKETDYKAVQLLKQQTKVLLGLSFWDILLRKLRVNDRLNAEYGNVGNNEETLDDH.

The tract at residues 1–38 is disordered; the sequence is MAKRLLESSQNDQANRKNSKIEKKEVSFYEEEETDDSF. Residues 28 to 38 are compositionally biased toward acidic residues; it reads FYEEEETDDSF.

The protein belongs to the XPC family.

The protein resides in the nucleus. Its function is as follows. Involved in nucleotide excision repair (NER) of damaged ribosomal DNA (rDNA). Required for the repair of the RNA polymerase I-transcribed strand of rDNA. This chain is DNA repair protein RAD34 (RAD34), found in Saccharomyces cerevisiae (strain ATCC 204508 / S288c) (Baker's yeast).